Consider the following 1069-residue polypeptide: DNA annealing helicase and endonuclease ZRANB3 (1069 aa).

Residues 46–208 form the Helicase ATP-binding domain; the sequence is VFALRRDGRC…FMQIEALFPQ (163 aa). The DNA annealing helicase activity stretch occupies residues 46–481; the sequence is VFALRRDGRC…GRKEKLQATE (436 aa). 59-66 contacts ATP; the sequence is DEMGLGKT. The DEAH box motif lies at 157 to 160; it reads DESH. In terms of domain architecture, Helicase C-terminal spans 325-485; sequence AVKDYIKMLL…KLQATEDDKE (161 aa). A PIP-box motif is present at residues 518-525; that stretch reads QHDIRSFF. The segment at 617–646 adopts a RanBP2-type zinc-finger fold; the sequence is PEKGWQCGFCTFLNNPGLPYCEMCENPRSR. The tract at residues 648 to 720 is disordered; sequence AGRNHLQDNN…PEIGQLNNSG (73 aa). Basic and acidic residues-rich tracts occupy residues 652–661 and 677–707; these read HLQDNNKNDE and ECER…EDRL. Positions 1001 to 1041 constitute an HNH domain; sequence PGEGHFWQVDHIRPVYEGGGQCSLDNLQTLCTVCHKERTAQ. The segment at 1001–1069 is endonuclease activity; sequence PGEGHFWQVD…SDITRFLVKK (69 aa). An APIM motif motif is present at residues 1064–1068; it reads RFLVK.

The protein belongs to the SNF2/RAD54 helicase family. As to quaternary structure, interacts (via PIP-box and RanBP2-type zinc finger) with PCNA (when PCNA is polyubiquitinated via 'Lys-63'-linked polyubiquitin).

The protein localises to the nucleus. It is found in the chromosome. Functionally, DNA annealing helicase and endonuclease required to maintain genome stability at stalled or collapsed replication forks by facilitating fork restart and limiting inappropriate recombination that could occur during template switching events. Recruited to the sites of stalled DNA replication by polyubiquitinated PCNA and acts as a structure-specific endonuclease that cleaves the replication fork D-loop intermediate, generating an accessible 3'-OH group in the template of the leading strand, which is amenable to extension by DNA polymerase. In addition to endonuclease activity, also catalyzes the fork regression via annealing helicase activity in order to prevent disintegration of the replication fork and the formation of double-strand breaks. In Mus musculus (Mouse), this protein is DNA annealing helicase and endonuclease ZRANB3 (Zranb3).